The following is a 119-amino-acid chain: Large ribosomal subunit protein uL18 (119 aa).

This sequence belongs to the universal ribosomal protein uL18 family. In terms of assembly, part of the 50S ribosomal subunit; part of the 5S rRNA/L5/L18/L25 subcomplex. Contacts the 5S and 23S rRNAs.

In terms of biological role, this is one of the proteins that bind and probably mediate the attachment of the 5S RNA into the large ribosomal subunit, where it forms part of the central protuberance. The protein is Large ribosomal subunit protein uL18 of Desulfovibrio desulfuricans (strain ATCC 27774 / DSM 6949 / MB).